We begin with the raw amino-acid sequence, 183 residues long: dCTP deaminase (183 aa).

DCTP is bound by residues 106–111, 130–132, Gln151, Tyr165, and Gln175; these read KSTYAR and TLE. Residue Glu132 is the Proton donor/acceptor of the active site.

The protein belongs to the dCTP deaminase family. In terms of assembly, homotrimer.

The catalysed reaction is dCTP + H2O + H(+) = dUTP + NH4(+). It functions in the pathway pyrimidine metabolism; dUMP biosynthesis; dUMP from dCTP (dUTP route): step 1/2. Its function is as follows. Catalyzes the deamination of dCTP to dUTP. This chain is dCTP deaminase, found in Acidobacterium capsulatum (strain ATCC 51196 / DSM 11244 / BCRC 80197 / JCM 7670 / NBRC 15755 / NCIMB 13165 / 161).